The following is a 354-amino-acid chain: Ornithine transcarbamylase, mitochondrial (354 aa).

The transit peptide at methionine 1–glutamine 32 directs the protein to the mitochondrion. N6-acetyllysine; alternate is present on lysine 70. Lysine 70 carries the post-translational modification N6-succinyllysine; alternate. Residue lysine 80 is modified to N6-succinyllysine. At lysine 88 the chain carries N6-acetyllysine; alternate. Lysine 88 carries the N6-succinyllysine; alternate modification. Serine 90–arginine 94 serves as a coordination point for carbamoyl phosphate. The residue at position 133 (serine 133) is a Phosphoserine. Arginine 141 serves as a coordination point for carbamoyl phosphate. Residue arginine 141 coordinates L-ornithine. The residue at position 144 (lysine 144) is an N6-acetyllysine; alternate. An N6-succinyllysine; alternate modification is found at lysine 144. Position 168 (histidine 168) interacts with carbamoyl phosphate. Asparagine 199 provides a ligand contact to L-ornithine. N6-acetyllysine; alternate is present on residues lysine 221, lysine 231, and lysine 238. Residues lysine 221, lysine 231, and lysine 238 each carry the N6-succinyllysine; alternate modification. Position 243 is an N6-acetyllysine (lysine 243). Aspartate 263 to serine 267 is an L-ornithine binding site. Lysine 274 and lysine 289 each carry N6-succinyllysine. Lysine 292 is modified (N6-acetyllysine; alternate). N6-succinyllysine; alternate is present on lysine 292. Histidine 302 to proline 305 lines the L-ornithine pocket. Cysteine 303 is a catalytic residue. The residue at position 307 (lysine 307) is an N6-acetyllysine; alternate. Lysine 307 is modified (N6-succinyllysine; alternate). Arginine 330 contacts carbamoyl phosphate. Position 330 (arginine 330) interacts with L-ornithine.

Belongs to the aspartate/ornithine carbamoyltransferase superfamily. OTCase family. In terms of assembly, homotrimer. In terms of processing, acetylation at Lys-88 negatively regulates ornithine carbamoyltransferase activity in response to nutrient signals.

It localises to the mitochondrion matrix. The enzyme catalyses carbamoyl phosphate + L-ornithine = L-citrulline + phosphate + H(+). It functions in the pathway nitrogen metabolism; urea cycle; L-citrulline from L-ornithine and carbamoyl phosphate: step 1/1. With respect to regulation, negatively regulated by lysine acetylation. Its function is as follows. Catalyzes the second step of the urea cycle, the condensation of carbamoyl phosphate with L-ornithine to form L-citrulline. The urea cycle ensures the detoxification of ammonia by converting it to urea for excretion. This Mus musculus (Mouse) protein is Ornithine transcarbamylase, mitochondrial.